Reading from the N-terminus, the 277-residue chain is Transcription factor WRKY19 (277 aa).

A DNA-binding region (WRKY) is located at residues 100–168 (QDTASLDDGL…YLGDHTCGQA (69 aa)).

Belongs to the WRKY group III family.

It is found in the nucleus. In terms of biological role, may play a role in defense responses. The sequence is that of Transcription factor WRKY19 from Oryza sativa subsp. japonica (Rice).